Reading from the N-terminus, the 178-residue chain is Gamma-crystallin S (178 aa).

Residue Ser2 is modified to N-acetylserine. The segment at Ser2–Gly5 is N-terminal arm. 2 consecutive Beta/gamma crystallin 'Greek key' domains span residues Thr6–Gly44 and Gly45–His87. The segment at Leu88–Gln93 is connecting peptide. 2 consecutive Beta/gamma crystallin 'Greek key' domains span residues Tyr94–Glu134 and Gly135–Val177.

This sequence belongs to the beta/gamma-crystallin family. In terms of assembly, monomer.

In terms of biological role, crystallins are the dominant structural components of the vertebrate eye lens. This Bos taurus (Bovine) protein is Gamma-crystallin S (CRYGS).